Consider the following 92-residue polypeptide: WAP four-disulfide core domain protein 12 (92 aa).

Positions 1–23 (MGSSRFLVLMVSLALVTLVAAEG) are cleaved as a signal peptide. A WAP domain is found at 27-74 (NIEKPEVCPADNVRCIKSDPPQCHTDQDCQGIRKCCYLHCGFKCVIPV). 4 cysteine pairs are disulfide-bonded: Cys-34–Cys-62, Cys-41–Cys-66, Cys-49–Cys-61, and Cys-55–Cys-70.

The protein localises to the secreted. Functionally, antibacterial protein. Putative acid-stable proteinase inhibitor. The sequence is that of WAP four-disulfide core domain protein 12 (WFDC12) from Aotus nancymaae (Ma's night monkey).